A 354-amino-acid chain; its full sequence is MSTITVDLATKKYDVKIDNTLHTRLGQEISAVWSARKISLLTDSNVGPLYLKDTAKQLREVGFDILELEVPAGESSKSLSVAGELIAKMAAAGFTRGDGVIALGGGVIGDLGGVVASLYMRGIAFIQIATSLTAQVDSSVGGKTAVNLGNTKNIAGSFYQPDLDLVDVTYLNTLTDRDLVEGYAEVVKTSALANQDFFDFTGQIKSVADIRHHAQELSKRAIAYKASVVMADEKEAGDRQFLNFGHTFGHAIELLAHGELRHGEAVAIGMIAISSRFEQHGIMPRGLTTELLSRLEAVGLPTHSHFIGTTDFFNHLINDKKNHDGILNLVALEKVGQPIIVKKKIADMPAFVEN.

Residues 106–110 (GVIGD), 130–131 (TS), K143, and K152 each bind NAD(+). Residues E185, H246, and H262 each coordinate Zn(2+).

This sequence belongs to the sugar phosphate cyclases superfamily. Dehydroquinate synthase family. Co(2+) serves as cofactor. It depends on Zn(2+) as a cofactor. NAD(+) is required as a cofactor.

It localises to the cytoplasm. The catalysed reaction is 7-phospho-2-dehydro-3-deoxy-D-arabino-heptonate = 3-dehydroquinate + phosphate. It functions in the pathway metabolic intermediate biosynthesis; chorismate biosynthesis; chorismate from D-erythrose 4-phosphate and phosphoenolpyruvate: step 2/7. Functionally, catalyzes the conversion of 3-deoxy-D-arabino-heptulosonate 7-phosphate (DAHP) to dehydroquinate (DHQ). The chain is 3-dehydroquinate synthase from Leuconostoc mesenteroides subsp. mesenteroides (strain ATCC 8293 / DSM 20343 / BCRC 11652 / CCM 1803 / JCM 6124 / NCDO 523 / NBRC 100496 / NCIMB 8023 / NCTC 12954 / NRRL B-1118 / 37Y).